Reading from the N-terminus, the 267-residue chain is Undecaprenyl-diphosphatase (267 aa).

Helical transmembrane passes span 4 to 24, 41 to 61, 69 to 89, 96 to 116, 173 to 193, 207 to 227, and 239 to 259; these read LYALILGIIEGLTEFLPISST, FWKSFLIIIQLGSILAVIFVF, LDIWLKLAVGFFPTGVIGLFV, LFNGWVVVGMLIFGGVVFILI, AAEFSFLLAIPTMIIATAYSI, IPLGIGFITAFIVAVLVIKFF, and FGIYRIILGFVFFYLYYSGIL.

This sequence belongs to the UppP family.

It is found in the cell inner membrane. It carries out the reaction di-trans,octa-cis-undecaprenyl diphosphate + H2O = di-trans,octa-cis-undecaprenyl phosphate + phosphate + H(+). Functionally, catalyzes the dephosphorylation of undecaprenyl diphosphate (UPP). Confers resistance to bacitracin. This is Undecaprenyl-diphosphatase from Campylobacter jejuni subsp. jejuni serotype O:23/36 (strain 81-176).